Reading from the N-terminus, the 84-residue chain is Large ribosomal subunit protein bL27 (84 aa).

Residues 1–21 form a disordered region; sequence MAHKKGGGSTKNGRDSNPKYL.

Belongs to the bacterial ribosomal protein bL27 family.

The polypeptide is Large ribosomal subunit protein bL27 (Pelodictyon phaeoclathratiforme (strain DSM 5477 / BU-1)).